Reading from the N-terminus, the 226-residue chain is MSDETNAAVWDDSLLVKTYDESVGLAREALARRLADSTNKREEENAAAAEEEAGEISATGGATSPEPVSFKVGDYARATYVDGVDYEGAVVSINEEKGTCVLRYLGYENEQEVLLVDLLPSWGKRVRREQFLIAKKDEDEQLSRPKASAGSHSKTPKSSRRSRISGGLVMPPMPPVPPMIVGQGDGAEQDFVAMLTAWYMSGYYTGLYQGKKEASTTSGKKKTPKK.

A compositionally biased stretch (basic and acidic residues) spans 35–44 (ADSTNKREEE). The disordered stretch occupies residues 35–68 (ADSTNKREEENAAAAEEEAGEISATGGATSPEPV). Residues 69 to 128 (SFKVGDYARATYVDGVDYEGAVVSINEEKGTCVLRYLGYENEQEVLLVDLLPSWGKRVRR) enclose the Tudor domain. A disordered region spans residues 137 to 172 (DEDEQLSRPKASAGSHSKTPKSSRRSRISGGLVMPP). Residues 154 to 163 (KTPKSSRRSR) are compositionally biased toward basic residues. A required for homodimerization region spans residues 159-226 (SRRSRISGGL…TSGKKKTPKK (68 aa)).

Belongs to the SMN family. As to quaternary structure, homodimer (via C-terminal region). Component of the core survival motor neuron (SMN) complex composed of Smn, Gem2, Gem3, rig/Gem5 and one of 3 almost identical Gem4 paralogs encoded by Glos/Gem4a, Gem4b or Gem4c. Interacts with Gem3 (via C-terminus); the interaction is direct and stabilizes Smn. Part of a minimal SMN complex composed of Smn and Gem2 only; this complex is active in UsnRNP assembly. The SMN complex associates with the entire set of spliceosomal snRNP Sm proteins, SmB, SmD1, SmD2, SmD3, SmE, SmF and SmG, and with the snRNP-specific proteins snRNP-U1-70K, U2A, snf/U1A and U5-116KD. Interacts with Glos/Gem4a; the interaction is probably indirect. Interacts with Sbat and Vlet; Sbat and Vlet, along with Hez, may form an accessory subcomplex involved in SMN complex function. Interacts weakly with Gem3. Interacts with SmB and SmD1; the interaction is favored by methylation of the Sm proteins. Interacts with Actn; the interaction occurs in thoracic tissues and in adult flies. Interacts with Rpp20. Interacts with msk and Snup; these interactions are RNA-dependent. In late first instar larvae, expressed in pNBs. Expression increases as the pNBs enlarge, with the highest accumulation observed in dividing pNBs of second and third instar larvae. Enriched in type ID (thoracic and brain lobe), type IA and all the mira-expressing NBs of the brain lobes. In larvae, also expressed in muscle fibers. In larval and adult testis, expressed in germline stem cells and gonialblast, expression decreases as cells differentiate into cysts and spermatocytes. In adult fly thorax, expressed in the IFMs. In adult ovary, expressed in germline stem cells, cystoblasts, follicle cells, nurse cells and oocyte (at protein level). Also expressed in larval salivary glands.

It localises to the cytoplasm. The protein localises to the nucleus. It is found in the U-body. The protein resides in the gem. Its subcellular location is the cajal body. It localises to the myofibril. The protein localises to the sarcomere. It is found in the i band. The protein resides in the z line. Its function is as follows. Core component of the survival motor neuron (SMN) complex that plays an essential role in spliceosomal small nuclear ribonucleoprotein (snRNP) assembly in the cytoplasm, is required for pre-mRNA splicing in the nucleus and acts as a chaperone that discriminates target and non-target RNAs of Sm proteins. A major component of nuclear bodies known as gems (gemini of Cajal bodies) thought to be storage depots of excess SMN complexes. Required for normal expression of spliceosomal snRNAs and for U12 intron splicing. Required in cholinergic neurons, but not in motor neurons, to ensure correct splicing and proper levels of stas mRNA and normal neurotransmitter release by motor neurons. However, Smn is required in motor neurons, but not in cholinergic neurons, for normal motor behavior but plays no role in synaptic transmission according to a report. In both muscle and neurons, required for the formation of a normal neuromuscular junction (NMJ) structure. Plays a neuron-specific role in long-term homeostatic compensation at the larval NMJ. In the thorax of adult flies, required for Act88F, an indirect flight muscle (IFM)-specific actin, expression and for proper IFM myofibril formation. In nurse cells, oocytes and follicle cells, required to maintain normal organization of nuclear compartments including chromosomes, nucleoli, Cajal bodies, histone locus bodies and heterochromatin. Required for the functional integrity of the cytoplasmic U snRNP body (U body) and P body. Required in dividing postembryonic neuroblasts (pNBs) for the correct basal localization of mira. The tight regulation of its expression is critical for stem cell division, proliferation and differentiation in male germline and developing central nervous system (CNS). Required for tracheal terminal cell lumen formation. In Drosophila melanogaster (Fruit fly), this protein is Survival motor neuron protein.